Reading from the N-terminus, the 164-residue chain is Phosphopantetheine adenylyltransferase (164 aa).

Substrate is bound at residue T10. ATP-binding positions include 10-11 and H18; that span reads TF. Substrate is bound by residues K42, L74, and R88. ATP-binding positions include 89 to 91, E99, and 124 to 130; these read GIR and NSFISST.

This sequence belongs to the bacterial CoaD family. Homohexamer. The cofactor is Mg(2+).

The protein localises to the cytoplasm. It carries out the reaction (R)-4'-phosphopantetheine + ATP + H(+) = 3'-dephospho-CoA + diphosphate. It functions in the pathway cofactor biosynthesis; coenzyme A biosynthesis; CoA from (R)-pantothenate: step 4/5. Functionally, reversibly transfers an adenylyl group from ATP to 4'-phosphopantetheine, yielding dephospho-CoA (dPCoA) and pyrophosphate. The protein is Phosphopantetheine adenylyltransferase of Pseudoalteromonas translucida (strain TAC 125).